The sequence spans 158 residues: MGSDKKTTEEKRKHKRNSPSSPRDEVKSKRQNIKGDEERRKEKDKSKKEKHKSHKSKCHSSEEKKSGEKHKTKSHKHKDKSKNKFEELSKDDYFSKNNEFASWLKDKKNLFFSDLSSETARNLFSDFVIQWNKGKLDSQYYEGIATGPRSSHAWNIKK.

Composition is skewed to basic and acidic residues over residues 1-11 and 22-47; these read MGSDKKTTEEK and PRDE…DKSK. Positions 1 to 88 are disordered; the sequence is MGSDKKTTEE…DKSKNKFEEL (88 aa). 2 stretches are compositionally biased toward basic residues: residues 48 to 58 and 67 to 81; these read KEKHKSHKSKC and GEKH…KDKS.

As to expression, specifically expressed in flowers pistils, especially in stigmas and styles. Barely detected in roots, stems, leaves, sepals, petals and stamen.

The protein localises to the nucleus. Functionally, component of the auxin signaling transduction pathway that regulates cell proliferation and differentiation during flowers stigmas and styles development. Involved in the regulation of auxin-related genes. This chain is Style cell-cycle inhibitor 1-B, found in Nicotiana tabacum (Common tobacco).